A 266-amino-acid polypeptide reads, in one-letter code: Hydroxyethylthiazole kinase (266 aa).

Residue Met43 participates in substrate binding. The ATP site is built by Arg119 and Thr166. Substrate is bound at residue Gly193.

The protein belongs to the Thz kinase family. The cofactor is Mg(2+).

It carries out the reaction 5-(2-hydroxyethyl)-4-methylthiazole + ATP = 4-methyl-5-(2-phosphooxyethyl)-thiazole + ADP + H(+). It functions in the pathway cofactor biosynthesis; thiamine diphosphate biosynthesis; 4-methyl-5-(2-phosphoethyl)-thiazole from 5-(2-hydroxyethyl)-4-methylthiazole: step 1/1. Catalyzes the phosphorylation of the hydroxyl group of 4-methyl-5-beta-hydroxyethylthiazole (THZ). The polypeptide is Hydroxyethylthiazole kinase (Methanococcus maripaludis (strain DSM 14266 / JCM 13030 / NBRC 101832 / S2 / LL)).